We begin with the raw amino-acid sequence, 100 residues long: Replication restart protein PriB (100 aa).

The SSB domain occupies 1–99 (MGFNNLVSLA…LRIQNIQEYK (99 aa)).

Belongs to the PriB family. Homodimer. Interacts with PriA and DnaT. Component of the replication restart primosome. Primosome assembly occurs via a 'hand-off' mechanism. PriA binds to replication forks, subsequently PriB then DnaT bind; DnaT then displaces ssDNA to generate the helicase loading substrate.

Its function is as follows. Involved in the restart of stalled replication forks, which reloads the replicative helicase on sites other than the origin of replication; the PriA-PriB pathway is the major replication restart pathway. During primosome assembly it facilitates complex formation between PriA and DnaT on DNA; stabilizes PriA on DNA. Stimulates the DNA unwinding activity of PriA helicase. In Neisseria meningitidis serogroup B (strain ATCC BAA-335 / MC58), this protein is Replication restart protein PriB.